Consider the following 148-residue polypeptide: Macrodomain Ter protein (148 aa).

It belongs to the MatP family. Homodimer.

Its subcellular location is the cytoplasm. Required for spatial organization of the terminus region of the chromosome (Ter macrodomain) during the cell cycle. Prevents early segregation of duplicated Ter macrodomains during cell division. Binds specifically to matS, which is a 13 bp signature motif repeated within the Ter macrodomain. In Pasteurella multocida (strain Pm70), this protein is Macrodomain Ter protein.